The chain runs to 302 residues: Acetaldehyde dehydrogenase 1 (302 aa).

Residue 12-15 (SGNI) coordinates NAD(+). Cysteine 127 (acyl-thioester intermediate) is an active-site residue. Residues 158 to 166 (SAGPGTRAN) and asparagine 277 each bind NAD(+).

The protein belongs to the acetaldehyde dehydrogenase family.

It catalyses the reaction acetaldehyde + NAD(+) + CoA = acetyl-CoA + NADH + H(+). This Mycobacteroides abscessus (strain ATCC 19977 / DSM 44196 / CCUG 20993 / CIP 104536 / JCM 13569 / NCTC 13031 / TMC 1543 / L948) (Mycobacterium abscessus) protein is Acetaldehyde dehydrogenase 1.